The following is a 143-amino-acid chain: uncharacterized protein (143 aa).

The chain crosses the membrane as a helical span at residues 65–85 (LVWMLVGTIVLSLDIIFPALV).

It localises to the membrane. This is an uncharacterized protein from Saccharomyces cerevisiae (strain ATCC 204508 / S288c) (Baker's yeast).